Reading from the N-terminus, the 354-residue chain is Membrane progestin receptor beta (354 aa).

Over 1-76 (MTTAILERLS…FSLFQKHNEV (76 aa)) the chain is Cytoplasmic. The chain crosses the membrane as a helical span at residues 77 to 97 (VNVWTHLLAALAVLLRFWAFV). At 98-111 (EAGALQWASPHTLP) the chain is on the extracellular side. A helical transmembrane segment spans residues 112–132 (LLLFILSSITYLTCSLLAHLL). The Cytoplasmic segment spans residues 133–173 (QSKSELSHYTFYFVDYVGVSVYQYGSALAHFFYSSDQAWYE). Residues 174–194 (LFWIFFLPAAAFCGWLSCAGC) form a helical membrane-spanning segment. The Extracellular segment spans residues 195–213 (CYAKYRYRRPYPVMRKICQ). A helical transmembrane segment spans residues 214 to 234 (VVPAGLAFVLDISPVAHRVAL). Residues 235 to 243 (CHLAGCQEQ) are Cytoplasmic-facing. Residues 244–264 (AAWYHTLQILFFLVSAYFFSC) traverse the membrane as a helical segment. Residues 265–283 (PVPEKYFPGSCDIVGHGHQ) lie on the Extracellular side of the membrane. The chain crosses the membrane as a helical span at residues 284-304 (IFHAFLSVCTLSQLEAILLDY). Over 305 to 315 (QGRHEIFLQRH) the chain is Cytoplasmic. The helical transmembrane segment at 316–336 (GPLSVYSACLSFFVLAACSAA) threads the bilayer. Over 337–354 (TATLLRHKVKDRLIKKDS) the chain is Extracellular.

The protein belongs to the ADIPOR family. Expressed in brain and testis.

It is found in the cell membrane. Functionally, plasma membrane progesterone (P4) receptor coupled to G proteins. Seems to act through a G(i) mediated pathway. May be involved in oocyte maturation. Also binds dehydroepiandrosterone (DHEA), pregnanolone, pregnenolone and allopregnanolone. The chain is Membrane progestin receptor beta from Mus musculus (Mouse).